We begin with the raw amino-acid sequence, 181 residues long: Crossover junction endodeoxyribonuclease RuvC (181 aa).

Residues aspartate 7, glutamate 67, and aspartate 139 contribute to the active site. Mg(2+) is bound by residues aspartate 7, glutamate 67, and aspartate 139.

It belongs to the RuvC family. In terms of assembly, homodimer which binds Holliday junction (HJ) DNA. The HJ becomes 2-fold symmetrical on binding to RuvC with unstacked arms; it has a different conformation from HJ DNA in complex with RuvA. In the full resolvosome a probable DNA-RuvA(4)-RuvB(12)-RuvC(2) complex forms which resolves the HJ. Mg(2+) is required as a cofactor.

It localises to the cytoplasm. The catalysed reaction is Endonucleolytic cleavage at a junction such as a reciprocal single-stranded crossover between two homologous DNA duplexes (Holliday junction).. The RuvA-RuvB-RuvC complex processes Holliday junction (HJ) DNA during genetic recombination and DNA repair. Endonuclease that resolves HJ intermediates. Cleaves cruciform DNA by making single-stranded nicks across the HJ at symmetrical positions within the homologous arms, yielding a 5'-phosphate and a 3'-hydroxyl group; requires a central core of homology in the junction. The consensus cleavage sequence is 5'-(A/T)TT(C/G)-3'. Cleavage occurs on the 3'-side of the TT dinucleotide at the point of strand exchange. HJ branch migration catalyzed by RuvA-RuvB allows RuvC to scan DNA until it finds its consensus sequence, where it cleaves and resolves the cruciform DNA. This is Crossover junction endodeoxyribonuclease RuvC from Bordetella avium (strain 197N).